The chain runs to 508 residues: Abl interactor 1 (508 aa).

Ala-2 is subject to N-acetylalanine. The interval 18–79 (ALIESYQNLT…NNVLQLLDIQ (62 aa)) is required for binding to WASF1. In terms of domain architecture, t-SNARE coiled-coil homology spans 45–107 (KALEETKAYT…DIHKEKVARR (63 aa)). Phosphotyrosine is present on Tyr-53. 3 disordered regions span residues 159–290 (KHGN…APPL), 306–375 (APGS…LTPQ), and 388–421 (NIADSPTPPPPPPPDDIPMFDDSPPPPPPPPVDY). Over residues 161 to 175 (GNNQPARTGTLSRTN) the composition is skewed to polar residues. 2 positions are modified to phosphothreonine: Thr-174 and Thr-178. 2 positions are modified to phosphoserine: Ser-183 and Ser-187. Tyr-213 is subject to Phosphotyrosine; by ABL1. Phosphothreonine is present on Thr-215. Phosphoserine is present on residues Ser-216, Ser-222, and Ser-225. Polar residues predominate over residues 222 to 235 (SQHSPGRTASLNQR). Residues 248 to 258 (SRENSGSSSIG) are compositionally biased toward low complexity. Positions 278–290 (VPPPSGAPPAPPL) are enriched in pro residues. Positions 307–322 (PGSQYGTMTRQISRHN) are enriched in polar residues. 2 positions are modified to phosphoserine: Ser-319 and Ser-323. Residues 337 to 347 (PSVTAQFSAQP) show a composition bias toward polar residues. Pro residues-rich tracts occupy residues 393–403 (PTPPPPPPPDD) and 410–419 (SPPPPPPPPV). Positions 446–505 (NYIEKVVAIYDYTKDKDDELSFMEGAIIYVIKKNDDGWYEGVCNRVTGLFPGNYVESIMH) constitute an SH3 domain. Tyr-455 carries the phosphotyrosine modification. Residue Ser-466 is modified to Phosphoserine. At Thr-507 the chain carries Phosphothreonine.

It belongs to the ABI family. As to quaternary structure, interacts with ABL1, ENAH, STX1A, SNAP25, VAMP2, EPS8, and through its N-terminus with WASF1. Part of a complex consisting of ABI1, STX1A and SNAP25. Part of a complex consisting of ABI1, EPS8 and SOS1. Interacts with SOS1, SOS2, GRB2, SPTA1 and the first SH3 domain of NCK1. Isoform 6 does not interact with NCK1. Component of the WAVE2 complex composed of ABI1, CYFIP1/SRA1, NCKAP1/NAP1 (NCKAP1l/HEM1 in hematopoietic cells) and WASF2/WAVE2. Interacts (via SH3 domain) with SHANK2 and SHANK3, but not SHANK1; the interaction is direct. Interacts with the heterodimer MYC:MAX; the interaction may enhance MYC:MAX transcriptional activity. Interacts with FNBP1L (via the SH3 domain), WASF2, and CDC42, but only in the presence of FNBP1L. In terms of assembly, (Microbial infection) Interacts with human cytomegalovirus/HHV-5 protein UL135. Phosphorylated on tyrosine residues after serum stimulation or induction by v-Abl. Seems to be phosphorylated at Tyr-53 by ABL1, required for nuclear but not for synaptic localization. Widely expressed, with highest expression in brain.

Its subcellular location is the cytoplasm. It is found in the nucleus. It localises to the cell projection. The protein localises to the lamellipodium. The protein resides in the filopodium. Its subcellular location is the growth cone. It is found in the postsynaptic density. It localises to the cytoskeleton. Functionally, may act in negative regulation of cell growth and transformation by interacting with nonreceptor tyrosine kinases ABL1 and/or ABL2. May play a role in regulation of EGF-induced Erk pathway activation. Involved in cytoskeletal reorganization and EGFR signaling. Together with EPS8 participates in transduction of signals from Ras to Rac. In vitro, a trimeric complex of ABI1, EPS8 and SOS1 exhibits Rac specific guanine nucleotide exchange factor (GEF) activity and ABI1 seems to act as an adapter in the complex. Regulates ABL1/c-Abl-mediated phosphorylation of ENAH. Recruits WASF1 to lamellipodia and there seems to regulate WASF1 protein level. In brain, seems to regulate the dendritic outgrowth and branching as well as to determine the shape and number of synaptic contacts of developing neurons. This Homo sapiens (Human) protein is Abl interactor 1.